Here is a 354-residue protein sequence, read N- to C-terminus: tRNA-specific 2-thiouridylase MnmA (354 aa).

ATP contacts are provided by residues Leu6 to Ser13 and Leu33. Cys100 serves as the catalytic Nucleophile. The cysteines at positions 100 and 195 are disulfide-linked. An ATP-binding site is contributed by Gly123. Residues Lys145–Gln147 are interaction with tRNA. The active-site Cysteine persulfide intermediate is the Cys195.

Belongs to the MnmA/TRMU family.

Its subcellular location is the cytoplasm. The enzyme catalyses S-sulfanyl-L-cysteinyl-[protein] + uridine(34) in tRNA + AH2 + ATP = 2-thiouridine(34) in tRNA + L-cysteinyl-[protein] + A + AMP + diphosphate + H(+). Catalyzes the 2-thiolation of uridine at the wobble position (U34) of tRNA, leading to the formation of s(2)U34. In Borrelia turicatae (strain 91E135), this protein is tRNA-specific 2-thiouridylase MnmA.